The chain runs to 425 residues: Serine--tRNA ligase (425 aa).

231–233 (TAE) contributes to the L-serine binding site. 262–264 (RSE) is a binding site for ATP. E285 is a binding site for L-serine. 349 to 352 (EISS) is a binding site for ATP. S385 lines the L-serine pocket.

This sequence belongs to the class-II aminoacyl-tRNA synthetase family. Type-1 seryl-tRNA synthetase subfamily. In terms of assembly, homodimer. The tRNA molecule binds across the dimer.

It is found in the cytoplasm. The enzyme catalyses tRNA(Ser) + L-serine + ATP = L-seryl-tRNA(Ser) + AMP + diphosphate + H(+). It catalyses the reaction tRNA(Sec) + L-serine + ATP = L-seryl-tRNA(Sec) + AMP + diphosphate + H(+). It functions in the pathway aminoacyl-tRNA biosynthesis; selenocysteinyl-tRNA(Sec) biosynthesis; L-seryl-tRNA(Sec) from L-serine and tRNA(Sec): step 1/1. Its function is as follows. Catalyzes the attachment of serine to tRNA(Ser). Is also able to aminoacylate tRNA(Sec) with serine, to form the misacylated tRNA L-seryl-tRNA(Sec), which will be further converted into selenocysteinyl-tRNA(Sec). The sequence is that of Serine--tRNA ligase from Bacillus velezensis (strain DSM 23117 / BGSC 10A6 / LMG 26770 / FZB42) (Bacillus amyloliquefaciens subsp. plantarum).